Consider the following 912-residue polypeptide: Probable dipeptidyl-aminopeptidase B (912 aa).

The span at 1–25 (MAAEKGESSDEERKPLTRDSMEYRD) shows a compositional bias: basic and acidic residues. Disordered regions lie at residues 1–31 (MAAEKGESSDEERKPLTRDSMEYRDSSNSLH) and 49–70 (GSTHDTGPNEIGRGDRDYSDDG). Residues 1-92 (MAAEKGESSD…GGKPVQKKVK (92 aa)) are Cytoplasmic-facing. Residues 93–113 (IVLGFLLFLCLSGWSLSFVLF) form a helical; Signal-anchor for type II membrane protein membrane-spanning segment. At 114 to 912 (LFGGHESSKT…RAAIWVGLSI (799 aa)) the chain is on the vacuolar side. Residues N130, N210, N346, N569, and N656 are each glycosylated (N-linked (GlcNAc...) asparagine). Catalysis depends on S751, which acts as the Charge relay system. N-linked (GlcNAc...) asparagine glycosylation occurs at N810. Active-site charge relay system residues include D828 and H861. N897 carries an N-linked (GlcNAc...) asparagine glycan.

It belongs to the peptidase S9B family.

Its subcellular location is the vacuole membrane. It carries out the reaction Release of an N-terminal dipeptide, Xaa-Yaa-|-Zaa-, from a polypeptide, preferentially when Yaa is Pro, provided Zaa is neither Pro nor hydroxyproline.. Functionally, type IV dipeptidyl-peptidase which removes N-terminal dipeptides sequentially from polypeptides having unsubstituted N-termini provided that the penultimate residue is proline. The chain is Probable dipeptidyl-aminopeptidase B (DAPB) from Paracoccidioides lutzii (strain ATCC MYA-826 / Pb01) (Paracoccidioides brasiliensis).